Here is a 97-residue protein sequence, read N- to C-terminus: Pyrin domain-containing protein 2 (97 aa).

Residues 1–94 (MASSAELDFN…SGRADEHCVM (94 aa)) enclose the Pyrin domain.

Interacts with PYCARD/ASC (via pyrin domain). Interacts with NLRP2 (via pyrin domain). As to expression, predominantly expressed in peripheral blood. Weakly expressed in testis.

It is found in the cytoplasm. The protein localises to the nucleus. In terms of biological role, may play a role in innate immunity by disrupting the interaction between PYCARD and NLRP3, thereby regulating the NLRP3 inflammasome. May also inhibit NF-kappa-B signaling distally by affecting the nuclear accumulation of RELA. The protein is Pyrin domain-containing protein 2 of Homo sapiens (Human).